Here is a 116-residue protein sequence, read N- to C-terminus: NADH-ubiquinone oxidoreductase chain 3 (116 aa).

3 helical membrane-spanning segments follow: residues 3 to 23, 56 to 76, and 87 to 107; these read LITT…TISF, FFLI…LLPL, and LTLI…IYEW.

This sequence belongs to the complex I subunit 3 family.

Its subcellular location is the mitochondrion membrane. It carries out the reaction a ubiquinone + NADH + 5 H(+)(in) = a ubiquinol + NAD(+) + 4 H(+)(out). In terms of biological role, core subunit of the mitochondrial membrane respiratory chain NADH dehydrogenase (Complex I) that is believed to belong to the minimal assembly required for catalysis. Complex I functions in the transfer of electrons from NADH to the respiratory chain. The immediate electron acceptor for the enzyme is believed to be ubiquinone. In Oncorhynchus keta (Chum salmon), this protein is NADH-ubiquinone oxidoreductase chain 3 (MT-ND3).